Here is a 132-residue protein sequence, read N- to C-terminus: MCSAGELLRGGDGGERDEDGDALAEREAAGTGWDPGASPRRRGQRPKESEQDVEDSQNHTGEPVGDDYKKMGTLFGELNKNLINMGFTRMYFGERIVEPVIVIFFWVMLWFLGLQALGLVAVLCLVIIYVQQ.

The interval 1–68 is disordered; that stretch reads MCSAGELLRG…HTGEPVGDDY (68 aa). Residues 100-120 form a helical membrane-spanning segment; that stretch reads VIVIFFWVMLWFLGLQALGLV.

The protein belongs to the FAM241 family.

It is found in the membrane. This is an uncharacterized protein from Homo sapiens (Human).